A 518-amino-acid chain; its full sequence is Glutamate--cysteine ligase (518 aa).

The protein belongs to the glutamate--cysteine ligase type 1 family. Type 1 subfamily.

It catalyses the reaction L-cysteine + L-glutamate + ATP = gamma-L-glutamyl-L-cysteine + ADP + phosphate + H(+). Its pathway is sulfur metabolism; glutathione biosynthesis; glutathione from L-cysteine and L-glutamate: step 1/2. The polypeptide is Glutamate--cysteine ligase (Shigella boydii serotype 18 (strain CDC 3083-94 / BS512)).